The sequence spans 256 residues: 1-(5-phosphoribosyl)-5-[(5-phosphoribosylamino)methylideneamino] imidazole-4-carboxamide isomerase (256 aa).

Aspartate 8 (proton acceptor) is an active-site residue. The active-site Proton donor is aspartate 130.

Belongs to the HisA/HisF family.

Its subcellular location is the cytoplasm. The enzyme catalyses 1-(5-phospho-beta-D-ribosyl)-5-[(5-phospho-beta-D-ribosylamino)methylideneamino]imidazole-4-carboxamide = 5-[(5-phospho-1-deoxy-D-ribulos-1-ylimino)methylamino]-1-(5-phospho-beta-D-ribosyl)imidazole-4-carboxamide. It functions in the pathway amino-acid biosynthesis; L-histidine biosynthesis; L-histidine from 5-phospho-alpha-D-ribose 1-diphosphate: step 4/9. This is 1-(5-phosphoribosyl)-5-[(5-phosphoribosylamino)methylideneamino] imidazole-4-carboxamide isomerase from Chlorobium phaeovibrioides (strain DSM 265 / 1930) (Prosthecochloris vibrioformis (strain DSM 265)).